The sequence spans 415 residues: Histidine--tRNA ligase (415 aa).

Belongs to the class-II aminoacyl-tRNA synthetase family. As to quaternary structure, homodimer.

Its subcellular location is the cytoplasm. It catalyses the reaction tRNA(His) + L-histidine + ATP = L-histidyl-tRNA(His) + AMP + diphosphate + H(+). This is Histidine--tRNA ligase from Clostridium botulinum (strain Loch Maree / Type A3).